The sequence spans 472 residues: Tryptophanase (472 aa).

Lys-270 bears the N6-(pyridoxal phosphate)lysine mark.

The protein belongs to the beta-eliminating lyase family. In terms of assembly, homotetramer. Pyridoxal 5'-phosphate serves as cofactor.

The catalysed reaction is L-tryptophan + H2O = indole + pyruvate + NH4(+). The protein operates within amino-acid degradation; L-tryptophan degradation via pyruvate pathway; indole and pyruvate from L-tryptophan: step 1/1. In Haemophilus influenzae (strain 86-028NP), this protein is Tryptophanase.